We begin with the raw amino-acid sequence, 295 residues long: Regucalcin (295 aa).

Glu18 provides a ligand contact to a divalent metal cation. Residues Arg100, Asn102, and Asp120 each contribute to the substrate site. The a divalent metal cation site is built by Asn150 and Asp200. Asp200 acts as the Proton donor/acceptor in catalysis.

Belongs to the SMP-30/CGR1 family. Zn(2+) is required as a cofactor. The cofactor is Mn(2+). Ca(2+) serves as cofactor. Requires Mg(2+) as cofactor.

It localises to the cytoplasm. It catalyses the reaction D-glucono-1,5-lactone + H2O = D-gluconate + H(+). It functions in the pathway cofactor biosynthesis; L-ascorbate biosynthesis via UDP-alpha-D-glucuronate pathway; L-ascorbate from UDP-alpha-D-glucuronate: step 3/4. In terms of biological role, gluconolactonase with low activity towards other sugar lactones, including gulonolactone and galactonolactone. Catalyzes a key step in ascorbic acid (vitamin C) biosynthesis. Can also hydrolyze diisopropyl phosphorofluoridate and phenylacetate (in vitro). Calcium-binding protein. Modulates Ca(2+) signaling, and Ca(2+)-dependent cellular processes and enzyme activities. This is Regucalcin from Danio rerio (Zebrafish).